Reading from the N-terminus, the 1183-residue chain is SR-related and CTD-associated factor 4 (1183 aa).

Positions 1–139 (MDAVNAFNQE…PLLDMAAGTS (139 aa)) constitute a CID domain. Lysine 49 carries the post-translational modification N6-acetyllysine. Phosphoserine is present on serine 154. Disordered regions lie at residues 299 to 324 (VPVPSATSPPPPQTPFGYPGDGVQQP) and 348 to 561 (HHQV…QIKS). Positions 367 to 380 (APPPFPPMPQPGMP) are enriched in pro residues. Over residues 381–398 (QPGMAQPGLAQPGMAQPT) the composition is skewed to low complexity. Over residues 399–410 (MPQPGMPQPGMP) the composition is skewed to pro residues. Low complexity predominate over residues 411–428 (QPGMAQPGLAQPGMAQPG). The span at 429-440 (MPQPAMPQPAMP) shows a compositional bias: pro residues. A compositionally biased stretch (polar residues) spans 457-469 (PTFQSTFQPQNEP). Over residues 488 to 498 (EVKRHVPESRK) the composition is skewed to basic and acidic residues. A compositionally biased stretch (basic residues) spans 499-536 (SRSRSPKRRRSRSGSRSRRSRHRRSRSRSRDRRRHSPR). The span at 538–553 (RSQERRDREKERERRQ) shows a compositional bias: basic and acidic residues. An RRM domain is found at 569–643 (TTLWVGQLDK…KSIKIAWALN (75 aa)). Disordered regions lie at residues 691–722 (WKGIPKKPDNEVAQNGGAETSHTEPVSPIPKP), 800–858 (LPPG…SLPT), and 920–1183 (MPPH…EPPR). At serine 717 the chain carries Phosphoserine. Composition is skewed to pro residues over residues 800–823 (LPPGPPPPITPPVSIPPPHTPPIS) and 920–952 (MPPHMMHRGPPPGPGGFAMPPPHGMKGPFPPHG). The span at 1006 to 1020 (SPSQQPAPAQQQPPQ) shows a compositional bias: low complexity. At serine 1042 the chain carries Phosphoserine. Over residues 1047–1122 (VENDRERYGS…NRKEKHEVAD (76 aa)) the composition is skewed to basic and acidic residues. Over residues 1136-1145 (QVGTIDTVSE) the composition is skewed to polar residues.

As to quaternary structure, interacts with POLR2A; via C-terminal heptapeptide repeat domain (CTD) phosphorylated at 'Ser-2' and 'Ser-5'.

It localises to the nucleus. In terms of biological role, anti-terminator protein required to prevent early mRNA termination during transcription. Together with SCAF8, acts by suppressing the use of early, alternative poly(A) sites, thereby preventing the accumulation of non-functional truncated proteins. Mechanistically, associates with the phosphorylated C-terminal heptapeptide repeat domain (CTD) of the largest RNA polymerase II subunit (POLR2A), and subsequently binds nascent RNA upstream of early polyadenylation sites to prevent premature mRNA transcript cleavage and polyadenylation. Independently of SCAF8, also acts as a suppressor of transcriptional readthrough. The protein is SR-related and CTD-associated factor 4 of Mus musculus (Mouse).